Here is a 256-residue protein sequence, read N- to C-terminus: Protein Ta0487 (256 aa).

The protein belongs to the CinA family.

This is Protein Ta0487 from Thermoplasma acidophilum (strain ATCC 25905 / DSM 1728 / JCM 9062 / NBRC 15155 / AMRC-C165).